Consider the following 77-residue polypeptide: NAD(P)H-quinone oxidoreductase subunit L (77 aa).

A run of 2 helical transmembrane segments spans residues 12–32 (LIAY…LLFY) and 47–67 (LGIY…SPFL).

Belongs to the complex I NdhL subunit family. As to quaternary structure, NDH-1 can be composed of about 15 different subunits; different subcomplexes with different compositions have been identified which probably have different functions.

The protein resides in the cellular thylakoid membrane. It carries out the reaction a plastoquinone + NADH + (n+1) H(+)(in) = a plastoquinol + NAD(+) + n H(+)(out). The enzyme catalyses a plastoquinone + NADPH + (n+1) H(+)(in) = a plastoquinol + NADP(+) + n H(+)(out). Functionally, NDH-1 shuttles electrons from an unknown electron donor, via FMN and iron-sulfur (Fe-S) centers, to quinones in the respiratory and/or the photosynthetic chain. The immediate electron acceptor for the enzyme in this species is believed to be plastoquinone. Couples the redox reaction to proton translocation, and thus conserves the redox energy in a proton gradient. Cyanobacterial NDH-1 also plays a role in inorganic carbon-concentration. The sequence is that of NAD(P)H-quinone oxidoreductase subunit L from Prochlorococcus marinus (strain AS9601).